We begin with the raw amino-acid sequence, 387 residues long: Galactokinase (387 aa).

33-36 (EHTD) contacts substrate. ATP-binding positions include S67 and 123 to 129 (GAGLSSS). S129 and E161 together coordinate Mg(2+). Catalysis depends on D173, which acts as the Proton acceptor. Y223 is a substrate binding site.

The protein belongs to the GHMP kinase family. GalK subfamily.

The protein localises to the cytoplasm. The enzyme catalyses alpha-D-galactose + ATP = alpha-D-galactose 1-phosphate + ADP + H(+). It participates in carbohydrate metabolism; galactose metabolism. Catalyzes the transfer of the gamma-phosphate of ATP to D-galactose to form alpha-D-galactose-1-phosphate (Gal-1-P). The protein is Galactokinase of Lacticaseibacillus casei (Lactobacillus casei).